The sequence spans 244 residues: MRWCLLLIWAQGLRQAPLASGMMTGTIETTGNISAEKGGSIILQCHLSSTTAQVTQVNWEQQDQLLAICNADLGWHISPSFKDRVAPGPGLGLTLQSLTVNDTGEYFCIYHTYPDGTYTGRIFLEVLESSVAEHGARFQIPLLGAMAATLVVICTAVIVVVALTRKKKALRIHSVEGDLRRKSAGQEEWSPSAPSPPGSCVQAEAAPAGLCGEQRGEDCAELHDYFNVLSYRSLGNCSFFTETG.

A signal peptide spans 1-21; that stretch reads MRWCLLLIWAQGLRQAPLASG. An Ig-like V-type domain is found at 22 to 124; it reads MMTGTIETTG…DGTYTGRIFL (103 aa). The Extracellular portion of the chain corresponds to 22–141; that stretch reads MMTGTIETTG…AEHGARFQIP (120 aa). 2 N-linked (GlcNAc...) asparagine glycosylation sites follow: asparagine 32 and asparagine 101. The segment at 32 to 42 is homodimerization; that stretch reads NISAEKGGSII. Cysteine 45 and cysteine 108 are disulfide-bonded. Residues 142 to 162 form a helical membrane-spanning segment; the sequence is LLGAMAATLVVICTAVIVVVA. Residues 163–244 lie on the Cytoplasmic side of the membrane; sequence LTRKKKALRI…GNCSFFTETG (82 aa). A Phosphotyrosine modification is found at tyrosine 225. The short motif at 229-234 is the ITIM motif element; that stretch reads LSYRSL.

Homodimer in cis; binds with high affinity to PVR, forming a heterotetrameric assembly of two TIGIT and two PVR molecules. Binds with lower affinity to NECTIN2 and NECTIN3. Interacts with GRB2. Interacts with NECTIN4. Expressed at low levels on peripheral memory and regulatory CD4+ T-cells and NK cells and is up-regulated following activation of these cells (at protein level).

The protein localises to the cell membrane. Its function is as follows. Inhibitory receptor that plays a role in the modulation of immune responses. Suppresses T-cell activation by promoting the generation of mature immunoregulatory dendritic cells. Upon binding to its ligands PVR/CD155 or NECTIN2/CD112, which are expressed on antigen-presenting cells, sends inhibitory signals to the T-cell or NK cell. Mechanistically, interaction with ligand leads to phosphorylation of the cytoplasmic tail by Src family tyrosine kinases such as FYN or LCK, allowing subsequent binding to adapter GRB2 and SHIP1/INPP5D. In turn, inhibits PI3K and MAPK signaling cascades. In addition, associates with beta-arrestin-2/ARRB2 to recruit SHIP1/INPP5D that suppresses autoubiquitination of TRAF6 and subsequently inhibits NF-kappa-B signaling pathway. Also acts as a receptor for NECTIN4 to inhibit NK cell cytotoxicity. The sequence is that of T-cell immunoreceptor with Ig and ITIM domains (TIGIT) from Homo sapiens (Human).